The following is a 768-amino-acid chain: DNA ligase (768 aa).

NAD(+) is bound by residues 61–65, 110–111, and glutamate 146; these read DAEFD and SL. Lysine 148 serves as the catalytic N6-AMP-lysine intermediate. Residues arginine 169, glutamate 206, lysine 322, and lysine 346 each coordinate NAD(+). Residues cysteine 443, cysteine 446, cysteine 462, and cysteine 468 each coordinate Zn(2+). The 90-residue stretch at 661 to 750 folds into the BRCT domain; sequence SVPRTLEGLT…PAQTGTEAEA (90 aa). The disordered stretch occupies residues 739–768; the sequence is NGPAQTGTEAEAATDEATVVDETAAEAATE. The span at 746-768 shows a compositional bias: low complexity; the sequence is TEAEAATDEATVVDETAAEAATE.

Belongs to the NAD-dependent DNA ligase family. LigA subfamily. It depends on Mg(2+) as a cofactor. Mn(2+) serves as cofactor.

It catalyses the reaction NAD(+) + (deoxyribonucleotide)n-3'-hydroxyl + 5'-phospho-(deoxyribonucleotide)m = (deoxyribonucleotide)n+m + AMP + beta-nicotinamide D-nucleotide.. Its function is as follows. DNA ligase that catalyzes the formation of phosphodiester linkages between 5'-phosphoryl and 3'-hydroxyl groups in double-stranded DNA using NAD as a coenzyme and as the energy source for the reaction. It is essential for DNA replication and repair of damaged DNA. This Paenarthrobacter aurescens (strain TC1) protein is DNA ligase.